Reading from the N-terminus, the 46-residue chain is NLIQLSNMIKCAIPGSRPLLHYTDYGCYCGKGGSGTPVDELDRCCK.

Ca(2+) contacts are provided by Tyr-28, Gly-30, and Gly-32. Residues Cys-29 and Cys-45 are joined by a disulfide bond.

It depends on Ca(2+) as a cofactor. As to expression, expressed by the venom gland.

Its subcellular location is the secreted. It carries out the reaction a 1,2-diacyl-sn-glycero-3-phosphocholine + H2O = a 1-acyl-sn-glycero-3-phosphocholine + a fatty acid + H(+). Functionally, snake venom phospholipase A2 (PLA2) that inhibits collagen-induced platelet aggregation. In terms of inhibition of platelet aggregation, superbin c is more potent as superbin d. PLA2 catalyzes the calcium-dependent hydrolysis of the 2-acyl groups in 3-sn-phosphoglycerides. The sequence is that of Phospholipase A2 superbin c from Austrelaps superbus (Lowland copperhead snake).